A 258-amino-acid polypeptide reads, in one-letter code: Deoxyribose-phosphate aldolase (258 aa).

The active-site Proton donor/acceptor is the Asp-102. The Schiff-base intermediate with acetaldehyde role is filled by Lys-165. Lys-199 serves as the catalytic Proton donor/acceptor.

The protein belongs to the DeoC/FbaB aldolase family. DeoC type 2 subfamily.

It localises to the cytoplasm. The enzyme catalyses 2-deoxy-D-ribose 5-phosphate = D-glyceraldehyde 3-phosphate + acetaldehyde. It functions in the pathway carbohydrate degradation; 2-deoxy-D-ribose 1-phosphate degradation; D-glyceraldehyde 3-phosphate and acetaldehyde from 2-deoxy-alpha-D-ribose 1-phosphate: step 2/2. Functionally, catalyzes a reversible aldol reaction between acetaldehyde and D-glyceraldehyde 3-phosphate to generate 2-deoxy-D-ribose 5-phosphate. The polypeptide is Deoxyribose-phosphate aldolase (Vibrio campbellii (strain ATCC BAA-1116)).